The following is a 211-amino-acid chain: Redox-sensing transcriptional repressor Rex (211 aa).

A DNA-binding region (H-T-H motif) is located at residues 17 to 56 (KYHRYLEELMKNEVDRISSKELGEKIGFTASQIRQDLNCF). Residue 91-96 (GAGNIG) participates in NAD(+) binding.

Belongs to the transcriptional regulatory Rex family. Homodimer.

The protein resides in the cytoplasm. Its function is as follows. Modulates transcription in response to changes in cellular NADH/NAD(+) redox state. This Clostridium beijerinckii (strain ATCC 51743 / NCIMB 8052) (Clostridium acetobutylicum) protein is Redox-sensing transcriptional repressor Rex.